The sequence spans 787 residues: Pyridoxal-dependent decarboxylase domain-containing protein 1 (787 aa).

Residues 26-44 (MLEKSPRRTEEENGKKPVS) show a composition bias toward basic and acidic residues. The disordered stretch occupies residues 26–52 (MLEKSPRRTEEENGKKPVSEDIPGPLQ). At Ser-652 the chain carries Phosphoserine. A disordered region spans residues 682-787 (QGTGVTPPPT…SQVEELERLR (106 aa)). Residues Thr-687 and Thr-691 each carry the phosphothreonine modification. A phosphoserine mark is found at Ser-710, Ser-718, Ser-722, and Ser-748. Residues 725–748 (HIEDLEKVEQLSSGLEHDNLEAHS) show a composition bias toward basic and acidic residues. Residues 759-771 (TARQTEALQNQAQ) show a composition bias toward polar residues. The segment covering 772-787 (HQEDDHSQVEELERLR) has biased composition (basic and acidic residues). A Phosphoserine modification is found at Ser-778.

It belongs to the group II decarboxylase family. Pyridoxal 5'-phosphate serves as cofactor.

The protein is Pyridoxal-dependent decarboxylase domain-containing protein 1 (Pdxdc1) of Mus musculus (Mouse).